An 84-amino-acid chain; its full sequence is MSETNRIQQGRVISDKMDKSIVVAIERTVKHPIYGKFIKRTTKVHAHDEDNTCGLGDKVEIAECRPLSKTKSWTLVKVLEKAKI.

The protein belongs to the universal ribosomal protein uS17 family. As to quaternary structure, part of the 30S ribosomal subunit.

Its function is as follows. One of the primary rRNA binding proteins, it binds specifically to the 5'-end of 16S ribosomal RNA. The polypeptide is Small ribosomal subunit protein uS17 (Vibrio atlanticus (strain LGP32) (Vibrio splendidus (strain Mel32))).